Here is a 939-residue protein sequence, read N- to C-terminus: Valine--tRNA ligase (939 aa).

A 'HIGH' region motif is present at residues 45 to 55 (PNVTGTLHMGH). The short motif at 549–553 (KMSKS) is the 'KMSKS' region element. Lys-552 provides a ligand contact to ATP. A coiled-coil region spans residues 876–939 (AAETARLRKE…KIRVQLVKLA (64 aa)).

The protein belongs to the class-I aminoacyl-tRNA synthetase family. ValS type 1 subfamily. In terms of assembly, monomer.

It is found in the cytoplasm. The catalysed reaction is tRNA(Val) + L-valine + ATP = L-valyl-tRNA(Val) + AMP + diphosphate. Catalyzes the attachment of valine to tRNA(Val). As ValRS can inadvertently accommodate and process structurally similar amino acids such as threonine, to avoid such errors, it has a 'posttransfer' editing activity that hydrolyzes mischarged Thr-tRNA(Val) in a tRNA-dependent manner. This is Valine--tRNA ligase from Chromobacterium violaceum (strain ATCC 12472 / DSM 30191 / JCM 1249 / CCUG 213 / NBRC 12614 / NCIMB 9131 / NCTC 9757 / MK).